Reading from the N-terminus, the 64-residue chain is uncharacterized protein (64 aa).

This is an uncharacterized protein from Saccharomyces cerevisiae (strain ATCC 204508 / S288c) (Baker's yeast).